The chain runs to 334 residues: MKEIFLQISNRQDLSQDQVQAVFDRILKNEVSESQIASFLMGLKIKGETSDEITGIVRALKSHATVLPETFTDAMCNCGTGGDQSYSFNISTTACFVLAAGGIRMAKAGNRSISSKSGSADVLEVLGINVAASPEILSKALDEVGLAFIFAQTMHPAMRFIGPARQALGIPTIMNLVGPLANPLDLETQLMGLYRVELQEIVANTIQQLGRKRAVIITGPDNMDEAALYGTNTYTLLEDGHISQHTFTYEDLGMEKVELSDITGGDAKENAEILLSVLRNEASPYLETTVLNVGLGFFANGKAGTIKEGVELARQLIADGSALEKLRKLQEVQV.

Residues Gly-79, 82-83 (GD), Ser-87, 89-92 (NIST), 107-115 (KAGNRSISS), and Ser-119 contribute to the 5-phospho-alpha-D-ribose 1-diphosphate site. Gly-79 contacts anthranilate. Ser-91 lines the Mg(2+) pocket. Position 110 (Asn-110) interacts with anthranilate. Residue Arg-165 participates in anthranilate binding. Asp-224 and Glu-225 together coordinate Mg(2+).

It belongs to the anthranilate phosphoribosyltransferase family. In terms of assembly, homodimer. The cofactor is Mg(2+).

It catalyses the reaction N-(5-phospho-beta-D-ribosyl)anthranilate + diphosphate = 5-phospho-alpha-D-ribose 1-diphosphate + anthranilate. Its pathway is amino-acid biosynthesis; L-tryptophan biosynthesis; L-tryptophan from chorismate: step 2/5. Functionally, catalyzes the transfer of the phosphoribosyl group of 5-phosphorylribose-1-pyrophosphate (PRPP) to anthranilate to yield N-(5'-phosphoribosyl)-anthranilate (PRA). The sequence is that of Anthranilate phosphoribosyltransferase from Streptococcus thermophilus (strain CNRZ 1066).